Consider the following 444-residue polypeptide: UDP-N-acetylmuramoylalanine--D-glutamate ligase (444 aa).

Glycine 118–threonine 124 is a binding site for ATP.

The protein belongs to the MurCDEF family.

The protein resides in the cytoplasm. It catalyses the reaction UDP-N-acetyl-alpha-D-muramoyl-L-alanine + D-glutamate + ATP = UDP-N-acetyl-alpha-D-muramoyl-L-alanyl-D-glutamate + ADP + phosphate + H(+). It participates in cell wall biogenesis; peptidoglycan biosynthesis. Cell wall formation. Catalyzes the addition of glutamate to the nucleotide precursor UDP-N-acetylmuramoyl-L-alanine (UMA). The sequence is that of UDP-N-acetylmuramoylalanine--D-glutamate ligase from Protochlamydia amoebophila (strain UWE25).